A 403-amino-acid polypeptide reads, in one-letter code: Heptahelical transmembrane protein ADIPOR3 (403 aa).

Residues methionine 1–threonine 73 are Cytoplasmic-facing. The chain crosses the membrane as a helical span at residues leucine 74–alanine 94. Topologically, residues threonine 95 to proline 209 are extracellular. Residues phenylalanine 210–leucine 230 traverse the membrane as a helical segment. Residues serine 231–tyrosine 246 lie on the Cytoplasmic side of the membrane. A helical membrane pass occupies residues alanine 247–cysteine 267. Over tyrosine 268–leucine 274 the chain is Extracellular. Residues tyrosine 275–phenylalanine 295 traverse the membrane as a helical segment. Over glutamine 296–cysteine 306 the chain is Cytoplasmic. A helical membrane pass occupies residues leucine 307–tryptophan 327. Residues histidine 328–glutamate 331 are Extracellular-facing. The chain crosses the membrane as a helical span at residues alanine 332–valine 352. Residues tyrosine 353–glutamine 374 lie on the Cytoplasmic side of the membrane. A helical transmembrane segment spans residues leucine 375–leucine 395. The Extracellular portion of the chain corresponds to lysine 396 to cysteine 403.

Belongs to the ADIPOR family.

Its subcellular location is the membrane. Its function is as follows. May play a role in abiotic stress response. The protein is Heptahelical transmembrane protein ADIPOR3 (ADIPOR3) of Oryza sativa subsp. japonica (Rice).